The primary structure comprises 438 residues: 23S rRNA (uracil(1939)-C(5))-methyltransferase RlmD (438 aa).

Residues 10–69 (KASVNTKHLSVDVVRLDHNGAGIAFVDKKPVFIEGALPGEKAIIQFIEQKKQFSRAKLIK) form the TRAM domain. Positions 82, 88, 91, and 169 each coordinate [4Fe-4S] cluster. S-adenosyl-L-methionine is bound by residues Gln272, Phe301, Asn306, Glu322, Asn349, and Asp370. The active-site Nucleophile is Cys396.

This sequence belongs to the class I-like SAM-binding methyltransferase superfamily. RNA M5U methyltransferase family. RlmD subfamily.

The enzyme catalyses uridine(1939) in 23S rRNA + S-adenosyl-L-methionine = 5-methyluridine(1939) in 23S rRNA + S-adenosyl-L-homocysteine + H(+). Catalyzes the formation of 5-methyl-uridine at position 1939 (m5U1939) in 23S rRNA. The protein is 23S rRNA (uracil(1939)-C(5))-methyltransferase RlmD of Aliivibrio fischeri (strain MJ11) (Vibrio fischeri).